The sequence spans 594 residues: MRTNYCGQLNSAHVGQKVTLCGWVNRRRDLGGLIFIDMRDREGIVQVFFDPEQKEAFSQASELRNEFCIQVTGTVRARPDSQVNKNMATGEIELAAESLSIFNRSEALPLDSNQTNTEERRLTYRYLDLRRPEMSQRLKTRAKITSFVRRFMDGEGFLDVETPMLTKATPEGARDYLVPSRVHKGKFYALPQSPQLFKQLLMMSGFDRYYQIVKCFRDEDLRADRQPEFTQIDVETSFMTAEQVREVMERMIHALWLDILNVDLGAFPVMTFAEAMRRYGSDKPDLRNPMELIDIADLVKNVEFSVFAQAANDEKCRVIALRVPGGASLTRKNIDEYTQFVSIYGAKGLAWMKVNEKAKGIEGVQSPIAKFLTNDVVNSILAATNATDGDLIFFGAGRQGTMSDAMGALRLKVGRDLELTDLNAWKPLWVIDFPMFEEDEDTGSLSAMHHPFTSPKDLTPAELTAHPVGAVANAYDMVINGYEVGGGSVRIHRNEMQQAVFSILGITPDEQREKFGFLLDALKFGTPPHAGLAFGLDRLVMLLTGTDNIRDVIAFPKTTAAACLMTNAPSFANEDALKELAIQVTEKEVSTDNE.

Residue Glu-171 participates in L-aspartate binding. Residues 195-198 (QLFK) form an aspartate region. Residue Arg-217 participates in L-aspartate binding. ATP contacts are provided by residues 217–219 (RDE) and Gln-226. His-449 provides a ligand contact to L-aspartate. ATP is bound at residue Glu-483. Arg-490 lines the L-aspartate pocket. 535-538 (GLDR) provides a ligand contact to ATP.

This sequence belongs to the class-II aminoacyl-tRNA synthetase family. Type 1 subfamily. In terms of assembly, homodimer.

The protein resides in the cytoplasm. It carries out the reaction tRNA(Asp) + L-aspartate + ATP = L-aspartyl-tRNA(Asp) + AMP + diphosphate. In terms of biological role, catalyzes the attachment of L-aspartate to tRNA(Asp) in a two-step reaction: L-aspartate is first activated by ATP to form Asp-AMP and then transferred to the acceptor end of tRNA(Asp). This is Aspartate--tRNA ligase from Proteus mirabilis (strain HI4320).